The following is a 408-amino-acid chain: Zinc-regulated transporter 1 (408 aa).

The next 3 membrane-spanning stretches (helical) occupy residues 64–84 (IGAI…PLVL), 101–121 (LFAR…HLLA), and 141–161 (WAPG…VLLN). Phosphothreonine is present on residues T234 and T237. 5 helical membrane passes run 254–274 (FIIL…TTAV), 279–299 (FKTL…GLGS), 315–335 (WVLG…GLGV), 351–371 (GVLD…ELLA), and 387–407 (LIYL…LGKW).

Belongs to the ZIP transporter (TC 2.A.5) family.

Its subcellular location is the endoplasmic reticulum membrane. Its function is as follows. High-affinity zinc transport protein. Regulates intracellular zinc levels. The chain is Zinc-regulated transporter 1 (zrt1) from Schizosaccharomyces pombe (strain 972 / ATCC 24843) (Fission yeast).